A 651-amino-acid chain; its full sequence is Epithelial sodium channel subunit beta (651 aa).

At 1–50 (MFLKRWFIRALHRLQKGPGYGYSELFVWYCNNTNTHGPKRLIIEGPKKKT) the chain is on the cytoplasmic side. Residues 51-71 (LWSLFTVTFACLVFWQWGLLI) traverse the membrane as a helical segment. Residues 72–541 (QTYLSWGVSV…GGQFGFWMGG (470 aa)) lie on the Extracellular side of the membrane. Intrachain disulfides connect Cys-98–Cys-281, Cys-205–Cys-212, Cys-258–Cys-265, Cys-370–Cys-457, Cys-395–Cys-453, Cys-399–Cys-449, Cys-408–Cys-435, and Cys-410–Cys-424. A helical membrane pass occupies residues 542–562 (SVLCIIEFGEVFIDCIWIAVI). Topologically, residues 563-651 (RFVKWYKNRK…TEHHSDSEDL (89 aa)) are cytoplasmic. Residues 612–651 (QPPDLYLPTTLEIPGTPPPKYDSLRVHPIDTEHHSDSEDL) are disordered. The span at 633 to 651 (DSLRVHPIDTEHHSDSEDL) shows a compositional bias: basic and acidic residues.

Belongs to the amiloride-sensitive sodium channel (TC 1.A.6) family. SCNN1B subfamily. Component of the heterotrimeric epithelial sodium channel (ENaC) composed of an alpha/SCNN1A, a beta/SCNN1B and a gamma/SCNN1G subunit. Strongly expressed in gill, kidney and rectum and more weakly in brain, eye, liver and muscle.

The protein resides in the apical cell membrane. It is found in the cytoplasmic vesicle membrane. The catalysed reaction is Na(+)(in) = Na(+)(out). With respect to regulation, originally identified and characterized by its inhibition by the diuretic drug amiloride. Its function is as follows. This is one of the three pore-forming subunits of the heterotrimeric epithelial sodium channel (ENaC), a critical regulator of sodium balance and fluid homeostasis. ENaC operates in epithelial tissues, where it mediates the electrodiffusion of sodium ions from extracellular fluid through the apical membrane of cells, with water following osmotically. This chain is Epithelial sodium channel subunit beta, found in Neoceratodus forsteri (Australian lungfish).